A 491-amino-acid chain; its full sequence is Probable glycine dehydrogenase (decarboxylating) subunit 2 (491 aa).

K273 carries the post-translational modification N6-(pyridoxal phosphate)lysine.

It belongs to the GcvP family. C-terminal subunit subfamily. The glycine cleavage system is composed of four proteins: P, T, L and H. In this organism, the P 'protein' is a heterodimer of two subunits. It depends on pyridoxal 5'-phosphate as a cofactor.

The catalysed reaction is N(6)-[(R)-lipoyl]-L-lysyl-[glycine-cleavage complex H protein] + glycine + H(+) = N(6)-[(R)-S(8)-aminomethyldihydrolipoyl]-L-lysyl-[glycine-cleavage complex H protein] + CO2. Its function is as follows. The glycine cleavage system catalyzes the degradation of glycine. The P protein binds the alpha-amino group of glycine through its pyridoxal phosphate cofactor; CO(2) is released and the remaining methylamine moiety is then transferred to the lipoamide cofactor of the H protein. This chain is Probable glycine dehydrogenase (decarboxylating) subunit 2, found in Bacillus cytotoxicus (strain DSM 22905 / CIP 110041 / 391-98 / NVH 391-98).